Reading from the N-terminus, the 292-residue chain is GTP cyclohydrolase FolE2 (292 aa).

Belongs to the GTP cyclohydrolase IV family.

The catalysed reaction is GTP + H2O = 7,8-dihydroneopterin 3'-triphosphate + formate + H(+). Its pathway is cofactor biosynthesis; 7,8-dihydroneopterin triphosphate biosynthesis; 7,8-dihydroneopterin triphosphate from GTP: step 1/1. Its function is as follows. Converts GTP to 7,8-dihydroneopterin triphosphate. The chain is GTP cyclohydrolase FolE2 from Staphylococcus aureus (strain Newman).